A 154-amino-acid polypeptide reads, in one-letter code: 17.8 kDa class I heat shock protein (154 aa).

Positions 40–154 constitute a sHSP domain; the sequence is ESSAFANTRI…PEVKSIEISG (115 aa).

The protein belongs to the small heat shock protein (HSP20) family. In terms of assembly, forms oligomeric structures.

The protein localises to the cytoplasm. This chain is 17.8 kDa class I heat shock protein, found in Solanum lycopersicum (Tomato).